A 177-amino-acid polypeptide reads, in one-letter code: Actinorhodin polyketide dimerase (177 aa).

This sequence to S.pristinaespiralis SnaC.

It participates in antibiotic biosynthesis; actinorhodin biosynthesis. The protein is Actinorhodin polyketide dimerase (actVB) of Streptomyces coelicolor (strain ATCC BAA-471 / A3(2) / M145).